Here is a 563-residue protein sequence, read N- to C-terminus: Arginine--tRNA ligase (563 aa).

Positions 121-131 (PNIAKPFSIGH) match the 'HIGH' region motif.

It belongs to the class-I aminoacyl-tRNA synthetase family. Monomer.

Its subcellular location is the cytoplasm. The catalysed reaction is tRNA(Arg) + L-arginine + ATP = L-arginyl-tRNA(Arg) + AMP + diphosphate. The chain is Arginine--tRNA ligase from Streptococcus agalactiae serotype III (strain NEM316).